A 514-amino-acid chain; its full sequence is Alpha-1,3/1,6-mannosyltransferase ALG2 (514 aa).

Residue N94 is glycosylated (N-linked (GlcNAc...) asparagine). Transmembrane regions (helical) follow at residues 443-463 (WAVMVILAASYILWRSSHVFG) and 468-490 (YIYLLTGGILVLRSRYLLAIFWV).

Belongs to the glycosyltransferase group 1 family.

Its subcellular location is the endoplasmic reticulum membrane. It carries out the reaction a beta-D-Man-(1-&gt;4)-beta-D-GlcNAc-(1-&gt;4)-alpha-D-GlcNAc-diphospho-di-trans,poly-cis-dolichol + GDP-alpha-D-mannose = an alpha-D-Man-(1-&gt;3)-beta-D-Man-(1-&gt;4)-beta-D-GlcNAc-(1-&gt;4)-alpha-D-GlcNAc-diphospho-di-trans,poly-cis-dolichol + GDP + H(+). The catalysed reaction is an alpha-D-Man-(1-&gt;3)-beta-D-Man-(1-&gt;4)-beta-D-GlcNAc-(1-&gt;4)-alpha-D-GlcNAc-diphospho-di-trans,poly-cis-dolichol + GDP-alpha-D-mannose = an alpha-D-Man-(1-&gt;3)-[alpha-D-Man-(1-&gt;6)]-beta-D-Man-(1-&gt;4)-beta-D-GlcNAc-(1-&gt;4)-alpha-D-GlcNAc-diphospho-di-trans,poly-cis-dolichol + GDP + H(+). It participates in protein modification; protein glycosylation. Its function is as follows. Mannosylates Man(2)GlcNAc(2)-dolichol diphosphate and Man(1)GlcNAc(2)-dolichol diphosphate to form Man(3)GlcNAc(2)-dolichol diphosphate. This chain is Alpha-1,3/1,6-mannosyltransferase ALG2 (ALG2), found in Eremothecium gossypii (strain ATCC 10895 / CBS 109.51 / FGSC 9923 / NRRL Y-1056) (Yeast).